Consider the following 510-residue polypeptide: G-protein coupled receptor dmsr-1 (510 aa).

At 1-35 (MEFTECKTTFIHLPDKSFLYDVFVSVYNFYHPIHA) the chain is on the extracellular side. The chain crosses the membrane as a helical span at residues 36-56 (YLSIFLCVLGTIANFCNIVVL). Topologically, residues 57–64 (TRRTMRTP) are cytoplasmic. A helical membrane pass occupies residues 65–85 (VNMILTAMASCDTVVLFSNLI). Residues 86-107 (YTTHYSFVAFKFCHPKHWSYSW) lie on the Extracellular side of the membrane. A helical transmembrane segment spans residues 108–128 (ALFLIAHAHLSLVAHSSSVWL). The Cytoplasmic segment spans residues 129 to 155 (SVMLALVRYVTLRSRGNMGGMQVTLRH). A helical membrane pass occupies residues 156–176 (SYYAVAVTVSLVAVLNAPNFL). Over 177 to 223 (NYKINEQPLNETCTDLDPMFWNSPAYLPGIADIAKANSCLVFRLSYW) the chain is Extracellular. N186 carries an N-linked (GlcNAc...) asparagine glycan. A helical transmembrane segment spans residues 224–244 (ISGMVFKVLPCALLSLFVWLL). The Cytoplasmic segment spans residues 245 to 307 (LRILREVREN…GERVDRTTHM (63 aa)). The helical transmembrane segment at 308 to 328 (LLAIVAVMLVTELPQGIMAVL) threads the bilayer. Residues 329–343 (SGMCSEEFRIYIYNN) lie on the Extracellular side of the membrane. The helical transmembrane segment at 344-364 (LGDILDLFSLCGSCCSFIIYC) threads the bilayer. The Cytoplasmic segment spans residues 365-510 (SMSGQFRNEF…DGIRGHFQNI (146 aa)). The tract at residues 452–510 (GCDSITPCSPMPTSFPSSPLPPIRSGEDESTDETSHLLNSSGPNSTASADGIRGHFQNI) is disordered. Residues 487-499 (HLLNSSGPNSTAS) show a composition bias toward polar residues.

The protein belongs to the G-protein coupled receptor 1 family. In terms of tissue distribution, expressed in head neurons including the RID neuron and the paired AIY neurons, and in tail neurons including the paired PHA and PHB neurons. Not expressed in AVE and AVA neurons.

It is found in the cell membrane. Its function is as follows. G-protein coupled receptor. In terms of biological role, G-protein coupled receptor for flp-13 RFamide neuropeptides in vitro. Upon activation by flp-13 RFamide neuropeptides, promotes sleep in response to cellular stress also known as stress-induced sleep (SIS), probably by inhibiting the activity of wake-promoting neurons. This is G-protein coupled receptor dmsr-1 from Caenorhabditis elegans.